The chain runs to 461 residues: MKRTQILDALNASAPCDDIRICGWVRTRRDAKGFSFLELNDGSCLTNIQVIVDEETDAYRSVGEATTGASVDIRGQLVESPGKGQKWEVRAATMTLLGKADPETFPLQKKRHSDEYLRTIAHLRPRTNKFGAAFRIRAEASYAVHSFFRENGFFNVHTPILTGSDCEGAGEMFRVTTLPAVGASAPAEGSVFDGDFFGKECSLTVSGQLEAEIMAQSLGKVYTFGPTFRAENSNTPRHAAEFWMVEPEMAFADLEDDMQLAEDMVKYVISHVMKHCAADLDLFCKFVDKELSARLENILAHPFARVSYTEAIEILKASGRKFEYPAEWGADLQTEHERYLAEEHFKKPVAVYDYPKEIKAFYMRLNDDGKTVAAMDLLVPRIGELVGGSQREERLDVLEARIKELGQNPDDYWWYLELRKFGTAPHAGFGMGFERLLMLLTGIGNIRDVIPFPRTPRHLEF.

It belongs to the class-II aminoacyl-tRNA synthetase family. As to quaternary structure, homodimer.

It localises to the cytoplasm. It carries out the reaction tRNA(Asn) + L-asparagine + ATP = L-asparaginyl-tRNA(Asn) + AMP + diphosphate + H(+). This chain is Asparagine--tRNA ligase, found in Oleidesulfovibrio alaskensis (strain ATCC BAA-1058 / DSM 17464 / G20) (Desulfovibrio alaskensis).